A 26-amino-acid polypeptide reads, in one-letter code: Metallothionein (26 aa).

Residues 1–14 (MGDCGCSGASSCNC) are compositionally biased toward low complexity. Residues 1 to 26 (MGDCGCSGASSCNCGSGCSCSNCGSK) form a disordered region. Residues cysteine 4, cysteine 6, cysteine 12, cysteine 14, cysteine 18, cysteine 20, and cysteine 23 each contribute to the Cu(+) site. Residues 15-26 (GSGCSCSNCGSK) are compositionally biased toward cys residues.

The protein belongs to the metallothionein superfamily. Type 8 family.

This chain is Metallothionein (cmt), found in Neurospora crassa (strain ATCC 24698 / 74-OR23-1A / CBS 708.71 / DSM 1257 / FGSC 987).